Consider the following 151-residue polypeptide: Ribosome maturation factor RimP (151 aa).

The protein belongs to the RimP family.

The protein resides in the cytoplasm. Functionally, required for maturation of 30S ribosomal subunits. The chain is Ribosome maturation factor RimP from Alcanivorax borkumensis (strain ATCC 700651 / DSM 11573 / NCIMB 13689 / SK2).